The chain runs to 146 residues: Gastrin-releasing peptide (146 aa).

The first 23 residues, 1–23 (MRGREFPLVLLALVLCQAPRGPA), serve as a signal peptide directing secretion. Methionine amide is present on methionine 50. The propeptide occupies 54–146 (STGESPYAYE…QHEGRIPQLN (93 aa)). A disordered region spans residues 95 to 146 (SHQPPQWEPLGIRQSTWDSKDGSNFKDMGPRLKVDGLSAPGSQHEGRIPQLN). A compositionally biased stretch (basic and acidic residues) spans 112 to 128 (DSKDGSNFKDMGPRLKV).

The protein belongs to the bombesin/neuromedin-B/ranatensin family.

Its subcellular location is the secreted. It localises to the cytoplasmic vesicle. The protein localises to the secretory vesicle lumen. It is found in the cell projection. The protein resides in the neuron projection. Functionally, stimulates the release of gastrin and other gastrointestinal hormones. Contributes to the perception of prurient stimuli and to the transmission of itch signals in the spinal cord that promote scratching behavior. Contributes primarily to nonhistaminergic itch sensation. In one study, shown to act in the amygdala as part of an inhibitory network which inhibits memory specifically related to learned fear. In another study, shown to act on vasoactive intestinal peptide (VIP)-expressing cells in the auditory cortex, most likely via extrasynaptic diffusion from local and long-range sources, to mediate disinhibition of glutamatergic cells via VIP cell-specific GRPR signaling which leads to enhanced auditory fear memories. Contributes to the regulation of food intake. Inhibits voltage-gated sodium channels but enhances voltage-gated potassium channels in hippocampal neurons. Induces sighing by acting directly on the pre-Botzinger complex, a cluster of several thousand neurons in the ventrolateral medulla responsible for inspiration during respiratory activity. Induces an itch response through activation of receptors present on mast cells, triggering mast cell degranulation. In Sus scrofa (Pig), this protein is Gastrin-releasing peptide (GRP).